A 1254-amino-acid polypeptide reads, in one-letter code: Structural polyprotein (1254 aa).

A host transcription inhibition region spans residues 43–77 (LQAQQMQQLISAVSALTTKQNVKAPKGQRQKKQQK). The disordered stretch occupies residues 60–113 (TKQNVKAPKGQRQKKQQKPKEKKENQKKKPTQKKKQQQKPKPQAKKKKPGRRER). Positions 70 to 108 (QRQKKQQKPKEKKENQKKKPTQKKKQQQKPKPQAKKKKP) match the Nuclear localization signal motif. Basic residues predominate over residues 84-110 (NQKKKPTQKKKQQQKPKPQAKKKKPGR). Positions 95 to 123 (QQQKPKPQAKKKKPGRRERMCMKIENDCI) are binding to the viral RNA. Residues 108 to 122 (PGRRERMCMKIENDC) form a ribosome-binding region. Cys-122 and Cys-137 form a disulfide bridge. Residues 122–270 (CIFEVKLDGK…RVTPEGTEEW (149 aa)) form the Peptidase S3 domain. The active-site Charge relay system is the His-148. The Nuclear export signal motif lies at 153-163 (IDNPDLAKLTY). Residues 164-169 (KKSSKY) are interaction with spike glycoprotein E2. Asp-170 (charge relay system) is an active-site residue. A dimerization of the capsid protein region spans residues 192-202 (PEGHYNWHHGA). Residue Ser-222 is the Charge relay system of the active site. Residues 228–232 (DNKGR) form a dimerization of the capsid protein region. A functions as an uncleaved signal peptide for the precursor of protein E3/E2 region spans residues 271–282 (SAALMMCILANT). The Extracellular portion of the chain corresponds to 271 to 694 (SAALMMCILA…PHEIIQYYYG (424 aa)). 3 disulfide bridges follow: Cys-277-Cys-286, Cys-291-Cys-295, and Cys-294-Cys-326. N-linked (GlcNAc...) asparagine; by host glycosylation occurs at Asn-281. An N-linked (GlcNAc...) asparagine; by host glycan is attached at Asn-328. Intrachain disulfides connect Cys-353–Cys-459, Cys-356–Cys-362, Cys-425–Cys-439, Cys-487–Cys-599, Cys-535–Cys-559, and Cys-537–Cys-554. Interaction with host Mxra8 receptor stretches follow at residues 360-363 (YFCY) and 396-398 (HAH). Residues 518–521 (TAGN) are interaction with host Mxra8 receptor. The N-linked (GlcNAc...) asparagine; by host glycan is linked to Asn-534. The interval 550–556 (TINTCKI) is interaction with host Mxra8 receptor. The N-linked (GlcNAc...) asparagine; by host glycan is linked to Asn-596. The helical transmembrane segment at 695–715 (LYPAATIAAVSGASLMALLTL) threads the bilayer. Over 716–756 (AATCCMLATARRKCLTPYALTPGAVVPLTLGLLCCAPRANA) the chain is Cytoplasmic. A lipid anchor (S-palmitoyl cysteine; by host) is attached at Cys-719. The tract at residues 724 to 728 (TARRK) is interaction with the capsid protein. S-palmitoyl cysteine; by host attachment occurs at residues Cys-729, Cys-749, and Cys-750. The segment at 729–749 (CLTPYALTPGAVVPLTLGLLC) is transient transmembrane before p62-6K protein processing. A disulfide bridge links Cys-729 with Cys-750. At 757 to 771 (ASFAETMAYLWDENK) the chain is on the extracellular side. The chain crosses the membrane as a helical span at residues 772–792 (TLFWMEFAAPAAALALLACCI). A topological domain (cytoplasmic) is located at residue Lys-793. A helical membrane pass occupies residues 794 to 814 (SLICCCKPFSFLVLLSLGASA). The Extracellular portion of the chain corresponds to 815–1231 (KAYEHTATIP…AMTWVQRLAS (417 aa)). Intrachain disulfides connect Cys-865-Cys-930, Cys-878-Cys-910, Cys-879-Cys-912, and Cys-884-Cys-894. Residues 900 to 917 (VYPFMWGGAYCFCDSENT) are E1 fusion peptide loop. Asn-957 carries N-linked (GlcNAc...) asparagine; by host glycosylation. Cystine bridges form between Cys-1075–Cys-1087, Cys-1117–Cys-1192, Cys-1122–Cys-1196, and Cys-1144–Cys-1186. A helical transmembrane segment spans residues 1232–1252 (GLGGLALIAVVVLVLVTCITM). A lipid anchor (S-palmitoyl cysteine; by host) is attached at Cys-1249. Cys-1249 is lipidated: S-stearoyl cysteine; by host. Residues 1253 to 1254 (RR) are Cytoplasmic-facing.

In terms of assembly, homodimer. Homomultimer. Interacts with host karyopherin KPNA4; this interaction allows the nuclear import of the viral capsid protein. Interacts with spike glycoprotein E2. Interacts with host IRAK1; the interaction leads to inhibition of IRAK1-dependent signaling. The precursor of protein E3/E2 and E1 form a heterodimer shortly after synthesis. As to quaternary structure, interacts with spike glycoprotein E2. The precursor of protein E3/E2 and E1 form a heterodimer shortly after synthesis. Processing of the precursor of protein E3/E2 into E2 and E3 results in a heterodimer of the spike glycoproteins E2 and E1. Spike at virion surface are constituted of a trimer of E2-E1 heterodimers. After target cell attachment and endocytosis, E1 change conformation to form homotrimers. Interacts with 6K protein. E1/E2 heterodimer interacts with host LDLR. In terms of assembly, interacts with spike glycoprotein E1. Processing of the precursor of protein E3/E2 into E2 and E3 results in a heterodimer of the spike glycoproteins E2 and E1. Spike at virion surface are constituted of a trimer of E2-E1 heterodimers. Interacts with 6K protein. Interacts with host MXRA8; this interaction mediates virus entry. Oligomer. Interacts with spike glycoprotein E1. Interacts with spike glycoprotein E2. Post-translationally, structural polyprotein: Specific enzymatic cleavages in vivo yield mature proteins. Capsid protein is auto-cleaved during polyprotein translation, unmasking a signal peptide at the N-terminus of the precursor of E3/E2. The remaining polyprotein is then targeted to the host endoplasmic reticulum, where host signal peptidase cleaves it into pE2, 6K and E1 proteins. pE2 is further processed to mature E3 and E2 by host furin in trans-Golgi vesicle. Palmitoylated via thioester bonds. These palmitoylations may induce disruption of the C-terminus transmembrane. This would result in the reorientation of E2 C-terminus from lumenal to cytoplasmic side. In terms of processing, N-glycosylated. Post-translationally, palmitoylated via thioester bonds.

It localises to the virion. It is found in the host cytoplasm. Its subcellular location is the host cell membrane. The protein localises to the host nucleus. The protein resides in the virion membrane. It localises to the host Golgi apparatus. It is found in the host trans-Golgi network. Its subcellular location is the host endoplasmic reticulum. It catalyses the reaction Autocatalytic release of the core protein from the N-terminus of the togavirus structural polyprotein by hydrolysis of a -Trp-|-Ser- bond.. Its function is as follows. Forms an icosahedral capsid with a T=4 symmetry composed of 240 copies of the capsid protein surrounded by a lipid membrane through which penetrate 80 spikes composed of trimers of E1-E2 heterodimers. The capsid protein binds to the viral RNA genome at a site adjacent to a ribosome binding site for viral genome translation following genome release. Possesses a protease activity that results in its autocatalytic cleavage from the nascent structural protein. Following its self-cleavage, the capsid protein transiently associates with ribosomes, and within several minutes the protein binds to viral RNA and rapidly assembles into icosahedric core particles. The resulting nucleocapsid eventually associates with the cytoplasmic domain of the spike glycoprotein E2 at the cell membrane, leading to budding and formation of mature virions. In case of infection, new virions attach to target cells and after clathrin-mediated endocytosis their membrane fuses with the host endosomal membrane. This leads to the release of the nucleocapsid into the cytoplasm, followed by an uncoating event necessary for the genomic RNA to become accessible. The uncoating might be triggered by the interaction of capsid proteins with ribosomes. Binding of ribosomes would release the genomic RNA since the same region is genomic RNA-binding and ribosome-binding. Specifically inhibits interleukin-1 receptor-associated kinase 1/IRAK1-dependent signaling during viral entry, representing a means by which the alphaviruses may evade innate immune detection and activation prior to viral gene expression. In terms of biological role, provides the signal sequence for the translocation of the precursor of protein E3/E2 to the host endoplasmic reticulum. Furin-cleaved E3 remains associated with spike glycoprotein E1 and mediates pH protection of the latter during the transport via the secretory pathway. After virion release from the host cell, the assembly protein E3 is gradually released in the extracellular space. Plays a role in viral attachment to target host cell, by binding to the cell receptor MXRA8. The host LDLR may also act as a cell receptor for viral entry. Synthesized as a p62 precursor which is processed by furin at the cell membrane just before virion budding, giving rise to E2-E1 heterodimer. The p62-E1 heterodimer is stable, whereas E2-E1 is unstable and dissociate at low pH. p62 is processed at the last step, presumably to avoid E1 fusion activation before its final export to cell surface. E2 C-terminus contains a transitory transmembrane that would be disrupted by palmitoylation, resulting in reorientation of the C-terminal tail from lumenal to cytoplasmic side. This step is critical since E2 C-terminus is involved in budding by interacting with capsid proteins. This release of E2 C-terminus in cytoplasm occurs lately in protein export, and precludes premature assembly of particles at the endoplasmic reticulum membrane. Functionally, acts as a viroporin that participates in virus glycoprotein processing and transport to the plasma membrane, cell permeabilization and budding of viral particles. The cation channel is permeable to Na(+)&gt;K(+)&gt;Ca(2+) in vitro. Disrupts the calcium homeostasis of the cell, probably at the endoplasmic reticulum level. This leads to cytoplasmic calcium elevation. Because of its lipophilic properties, the 6K protein is postulated to influence the selection of lipids that interact with the transmembrane domains of the glycoproteins, which, in turn, affects the deformability of the bilayer required for the extreme curvature that occurs as budding proceeds. Present in low amount in virions, about 3% compared to viral glycoproteins. Its function is as follows. Class II viral fusion protein. Fusion activity is inactive as long as E1 is bound to E2 in mature virion. After virus attachment to target cell via host MXRA8 and endocytosis, acidification of the endosome induce dissociation of E1/E2 heterodimer and concomitant trimerization of the E1 subunits. This E1 trimer is fusion active, and promotes release of viral nucleocapsid in cytoplasm after endosome and viral membrane fusion. Efficient fusion requires the presence of cholesterol and sphingolipid in the target membrane. This Aedes (Common banded mosquito) protein is Structural polyprotein.